Reading from the N-terminus, the 142-residue chain is Large ribosomal subunit protein uL13 (142 aa).

The protein belongs to the universal ribosomal protein uL13 family. As to quaternary structure, part of the 50S ribosomal subunit.

This protein is one of the early assembly proteins of the 50S ribosomal subunit, although it is not seen to bind rRNA by itself. It is important during the early stages of 50S assembly. This is Large ribosomal subunit protein uL13 from Pseudomonas paraeruginosa (strain DSM 24068 / PA7) (Pseudomonas aeruginosa (strain PA7)).